The sequence spans 402 residues: Imidazolonepropionase (402 aa).

Fe(3+) is bound by residues H66 and H68. Zn(2+)-binding residues include H66 and H68. 3 residues coordinate 4-imidazolone-5-propanoate: R75, Y138, and H171. Y138 lines the N-formimidoyl-L-glutamate pocket. H236 contributes to the Fe(3+) binding site. H236 is a Zn(2+) binding site. Q239 provides a ligand contact to 4-imidazolone-5-propanoate. Position 311 (D311) interacts with Fe(3+). D311 contacts Zn(2+). Residues N313 and G315 each contribute to the N-formimidoyl-L-glutamate site. Residue T316 coordinates 4-imidazolone-5-propanoate.

It belongs to the metallo-dependent hydrolases superfamily. HutI family. The cofactor is Zn(2+). Fe(3+) is required as a cofactor.

The protein resides in the cytoplasm. It catalyses the reaction 4-imidazolone-5-propanoate + H2O = N-formimidoyl-L-glutamate. The protein operates within amino-acid degradation; L-histidine degradation into L-glutamate; N-formimidoyl-L-glutamate from L-histidine: step 3/3. In terms of biological role, catalyzes the hydrolytic cleavage of the carbon-nitrogen bond in imidazolone-5-propanoate to yield N-formimidoyl-L-glutamate. It is the third step in the universal histidine degradation pathway. The polypeptide is Imidazolonepropionase (Pseudomonas aeruginosa (strain UCBPP-PA14)).